The following is a 64-amino-acid chain: Conotoxin Leo-T1 (64 aa).

The first 22 residues, 1-22 (MRCLPVFIILLLLIPSAPSVDA), serve as a signal peptide directing secretion. A propeptide spanning residues 23–48 (QPKTEDDVPLASLHDNAKLTLQGLWD) is cleaved from the precursor.

The protein belongs to the conotoxin T superfamily. Post-translationally, contains 2 disulfide bonds that can be either 'C1-C3, C2-C4' or 'C1-C4, C2-C3', since these disulfide connectivities have been observed for conotoxins with cysteine framework V (for examples, see AC P0DQQ7 and AC P81755). In terms of tissue distribution, expressed by the venom duct.

The protein localises to the secreted. The sequence is that of Conotoxin Leo-T1 from Conus leopardus (Leopard cone).